Consider the following 605-residue polypeptide: Elongation factor 4 (605 aa).

In terms of domain architecture, tr-type G spans 9–192; it reads SRIRNFCIIA…AIIARVPSPA (184 aa). Residues 21 to 26 and 139 to 142 each bind GTP; these read DHGKST and NKID.

It belongs to the TRAFAC class translation factor GTPase superfamily. Classic translation factor GTPase family. LepA subfamily.

The protein resides in the cell inner membrane. It carries out the reaction GTP + H2O = GDP + phosphate + H(+). Its function is as follows. Required for accurate and efficient protein synthesis under certain stress conditions. May act as a fidelity factor of the translation reaction, by catalyzing a one-codon backward translocation of tRNAs on improperly translocated ribosomes. Back-translocation proceeds from a post-translocation (POST) complex to a pre-translocation (PRE) complex, thus giving elongation factor G a second chance to translocate the tRNAs correctly. Binds to ribosomes in a GTP-dependent manner. The polypeptide is Elongation factor 4 (Chlorobium phaeovibrioides (strain DSM 265 / 1930) (Prosthecochloris vibrioformis (strain DSM 265))).